The following is a 494-amino-acid chain: Cytochrome P450 2A8 (494 aa).

Cys-439 serves as a coordination point for heme.

Belongs to the cytochrome P450 family. Heme serves as cofactor. As to expression, liver.

The protein resides in the endoplasmic reticulum membrane. It localises to the microsome membrane. The enzyme catalyses an organic molecule + reduced [NADPH--hemoprotein reductase] + O2 = an alcohol + oxidized [NADPH--hemoprotein reductase] + H2O + H(+). Highly active in 7-ethoxycoumarin O-deethylation, and benzphetamine N-demethylation; moderately active in testosterone 7-alpha-hydroxylation, ethylmorphine N-demethylation, p-nitroanisole O-demethylation; and only slightly active in benzopyrene 3-hydroxylation, 7-ethoxyresorufin O-deethylation, testosterone 2-alpha-hydroxylation and testosterone 17-oxidation. Competent in the metabolic activation of aflatoxin B1. This is Cytochrome P450 2A8 (CYP2A8) from Mesocricetus auratus (Golden hamster).